A 140-amino-acid chain; its full sequence is UPF0299 membrane protein CGSHiGG_01475 (140 aa).

4 consecutive transmembrane segments (helical) span residues 1-21, 33-52, 60-80, and 92-112; these read MIQK…MLYL, VPGS…TRVI, GASL…VGII, and ILLV…GFLG.

The protein belongs to the UPF0299 family.

The protein resides in the cell inner membrane. The sequence is that of UPF0299 membrane protein CGSHiGG_01475 from Haemophilus influenzae (strain PittGG).